The primary structure comprises 603 residues: Serine protease 56 (603 aa).

The first 19 residues, 1–19 (MLLAVLLLLPLPSSWFAHG), serve as a signal peptide directing secretion. A disordered region spans residues 64-96 (SHECRGSGRPRPQALLQDPPEPGPCGERRPSTA). Asn97 carries an N-linked (GlcNAc...) asparagine glycan. Residues 105 to 337 (IVGGSAAPPG…FKDWLQEQMS (233 aa)) enclose the Peptidase S1 domain. A disulfide bridge connects residues Cys130 and Cys146. Active-site charge relay system residues include His145 and Asp191. Intrachain disulfides connect Cys225/Cys292, Cys256/Cys271, and Cys282/Cys313. Residue Ser286 is the Charge relay system of the active site. Disordered regions lie at residues 442-474 (PARE…NGCP) and 573-603 (EGPW…ARQP).

The protein belongs to the peptidase S1 family. Expressed neural retina, cornea, sclera and optic nerve.

In terms of biological role, serine protease required during eye development. This chain is Serine protease 56 (PRSS56), found in Homo sapiens (Human).